The following is a 141-amino-acid chain: Nucleoside diphosphate kinase (141 aa).

Lys-9, Phe-57, Arg-85, Thr-91, Arg-102, and Asn-112 together coordinate ATP. The active-site Pros-phosphohistidine intermediate is His-115.

It belongs to the NDK family. In terms of assembly, homotetramer. The cofactor is Mg(2+).

It is found in the cytoplasm. The catalysed reaction is a 2'-deoxyribonucleoside 5'-diphosphate + ATP = a 2'-deoxyribonucleoside 5'-triphosphate + ADP. The enzyme catalyses a ribonucleoside 5'-diphosphate + ATP = a ribonucleoside 5'-triphosphate + ADP. Functionally, major role in the synthesis of nucleoside triphosphates other than ATP. The ATP gamma phosphate is transferred to the NDP beta phosphate via a ping-pong mechanism, using a phosphorylated active-site intermediate. This is Nucleoside diphosphate kinase from Chlamydia abortus (strain DSM 27085 / S26/3) (Chlamydophila abortus).